The primary structure comprises 214 residues: Large ribosomal subunit protein bL25 (214 aa).

The disordered stretch occupies residues proline 193–glutamate 214. A compositionally biased stretch (acidic residues) spans glutamate 198–glutamate 214.

The protein belongs to the bacterial ribosomal protein bL25 family. CTC subfamily. As to quaternary structure, part of the 50S ribosomal subunit; part of the 5S rRNA/L5/L18/L25 subcomplex. Contacts the 5S rRNA. Binds to the 5S rRNA independently of L5 and L18.

This is one of the proteins that binds to the 5S RNA in the ribosome where it forms part of the central protuberance. This chain is Large ribosomal subunit protein bL25, found in Nitrosococcus oceani (strain ATCC 19707 / BCRC 17464 / JCM 30415 / NCIMB 11848 / C-107).